The chain runs to 388 residues: MIISSSSDYREAARRRLPPFLFHYIDGGAYAEATLRRNVEDLSDLALRQRVLKSVGEVDLSTTLLKQQLSMPVGLAPVGLTGMYARRGEVQAAQAATQKGIPFTLSTVSVCSIEEVQSQVGKPIWFQLYVLKDRGFMKNALERAWAAGIRTLVFTVDMPVPGARYRDAHSGMSGPNAAFRRMVQAVLHPFWAYDVGLMGTPHDLGNVSAYRKEKTSLEDYVGWLGNNFDPSIGWKDLEWIREFWKGPMVIKGILDPEDARDAVRFGADGIIVSNHGGRQLDGVLSSARAMPAIADAVKGEMTLLADSGIRSGLDVVRMLAQGADGVLLGRAFVYALAAAGRAGVENLLDIIAKEMRVAMTLTGARAISDISRDSLVREIERPLARAAQ.

In terms of domain architecture, FMN hydroxy acid dehydrogenase spans 1-380 (MIISSSSDYR…SRDSLVREIE (380 aa)). Tyrosine 24 contributes to the substrate binding site. 2 residues coordinate FMN: serine 106 and glutamine 127. Tyrosine 129 provides a ligand contact to substrate. An FMN-binding site is contributed by threonine 155. Substrate is bound at residue arginine 164. Residue lysine 251 participates in FMN binding. Histidine 275 (proton acceptor) is an active-site residue. A substrate-binding site is contributed by arginine 278. 306-330 (DSGIRSGLDVVRMLAQGADGVLLGR) is an FMN binding site.

This sequence belongs to the FMN-dependent alpha-hydroxy acid dehydrogenase family. The cofactor is FMN.

It localises to the cell inner membrane. It carries out the reaction (S)-lactate + A = pyruvate + AH2. Its function is as follows. Catalyzes the conversion of L-lactate to pyruvate. Is coupled to the respiratory chain. The chain is L-lactate dehydrogenase from Xanthobacter autotrophicus (strain ATCC BAA-1158 / Py2).